A 652-amino-acid chain; its full sequence is Acetyl-coenzyme A synthetase (652 aa).

Residues R191–R194, T311, and N335 contribute to the CoA site. ATP contacts are provided by residues G387–P389, D411–T416, D500, and R515. Residue S523 participates in CoA binding. Residue R526 participates in ATP binding. Mg(2+)-binding residues include V537, H539, and I542. CoA is bound at residue R584. K609 is modified (N6-acetyllysine).

Belongs to the ATP-dependent AMP-binding enzyme family. The cofactor is Mg(2+). Acetylated. Deacetylation by the SIR2-homolog deacetylase activates the enzyme.

It catalyses the reaction acetate + ATP + CoA = acetyl-CoA + AMP + diphosphate. Its function is as follows. Catalyzes the conversion of acetate into acetyl-CoA (AcCoA), an essential intermediate at the junction of anabolic and catabolic pathways. Acs undergoes a two-step reaction. In the first half reaction, Acs combines acetate with ATP to form acetyl-adenylate (AcAMP) intermediate. In the second half reaction, it can then transfer the acetyl group from AcAMP to the sulfhydryl group of CoA, forming the product AcCoA. Enables the cell to use acetate during aerobic growth to generate energy via the TCA cycle, and biosynthetic compounds via the glyoxylate shunt. Acetylates CheY, the response regulator involved in flagellar movement and chemotaxis. The polypeptide is Acetyl-coenzyme A synthetase (Sodalis glossinidius (strain morsitans)).